We begin with the raw amino-acid sequence, 335 residues long: Methyltransferase pgmE (335 aa).

Belongs to the methyltransferase superfamily.

The protein operates within pigment biosynthesis. It functions in the pathway secondary metabolite biosynthesis. Methyltransferase; part of the gene cluster that mediates the biosynthesis of pleosporalin A, ascomycone A, as well as a third cryptic naphthoquinone derived pigment, all responsible for the coloration of conidia. Essential for the production of pleosporalin A, but not the 2 other final products. The pathway begins with the biosynthesis of the cyclized heptaketide 3-acetonyl-1,6,8-trihydroxy-2-naphthaldehyde by the NR-PKS pgmA. The C-6 hydroxyl group is further methylated by the O-methyltransferase pgmB to yield fusarubinaldehyde which is in turn oxidized by the cytochrome P450 monooxygenase pgmC at C-9. The C-1 hydroxyl group is then methylated spontaneously. Although pgmE, pgmD and pgmH are essential for the production of pleosporalin A, it is not the case for the 2 other final products and it remains difficult to assign a specific function to each enzyme. PgmF and pgmG seem not to be involved in pigment biosynthesis although they were regulated by the cluster-specific transcription factor pgmR. The sequence is that of Methyltransferase pgmE from Aspergillus terreus (strain NIH 2624 / FGSC A1156).